Here is a 137-residue protein sequence, read N- to C-terminus: Small ribosomal subunit protein uS12 (137 aa).

The disordered stretch occupies residues 1 to 24; that stretch reads MPTINQLVRKGRRSQSSKSKAPAL. Asp-102 is subject to 3-methylthioaspartic acid.

It belongs to the universal ribosomal protein uS12 family. As to quaternary structure, part of the 30S ribosomal subunit. Contacts proteins S8 and S17. May interact with IF1 in the 30S initiation complex.

In terms of biological role, with S4 and S5 plays an important role in translational accuracy. Its function is as follows. Interacts with and stabilizes bases of the 16S rRNA that are involved in tRNA selection in the A site and with the mRNA backbone. Located at the interface of the 30S and 50S subunits, it traverses the body of the 30S subunit contacting proteins on the other side and probably holding the rRNA structure together. The combined cluster of proteins S8, S12 and S17 appears to hold together the shoulder and platform of the 30S subunit. This is Small ribosomal subunit protein uS12 from Pediococcus pentosaceus (strain ATCC 25745 / CCUG 21536 / LMG 10740 / 183-1w).